The primary structure comprises 701 residues: Polyribonucleotide nucleotidyltransferase (701 aa).

Residues Asp-487 and Asp-493 each coordinate Mg(2+). Positions 553–612 constitute a KH domain; it reads PRLYTLRINPDKIRDVIGKGGSVIRALTEETGTSIDIAEDGLITIASVSAEGAEEAKRRI. One can recognise an S1 motif domain in the interval 622–692; that stretch reads GKIYEGTVVK…ERGRIRLSIK (71 aa).

Belongs to the polyribonucleotide nucleotidyltransferase family. It depends on Mg(2+) as a cofactor.

It is found in the cytoplasm. It carries out the reaction RNA(n+1) + phosphate = RNA(n) + a ribonucleoside 5'-diphosphate. Functionally, involved in mRNA degradation. Catalyzes the phosphorolysis of single-stranded polyribonucleotides processively in the 3'- to 5'-direction. The protein is Polyribonucleotide nucleotidyltransferase of Laribacter hongkongensis (strain HLHK9).